The following is a 202-amino-acid chain: Guanylate kinase (202 aa).

The region spanning 3-181 is the Guanylate kinase-like domain; sequence GNLFVVAAPS…ALDDLRAVVR (179 aa). An ATP-binding site is contributed by 10-17; the sequence is APSGAGKT.

Belongs to the guanylate kinase family.

The protein localises to the cytoplasm. It catalyses the reaction GMP + ATP = GDP + ADP. Its function is as follows. Essential for recycling GMP and indirectly, cGMP. The polypeptide is Guanylate kinase (Dechloromonas aromatica (strain RCB)).